The primary structure comprises 356 residues: Geranylgeranyl pyrophosphate synthase penG (356 aa).

3 residues coordinate isopentenyl diphosphate: K83, R86, and H115. Positions 122 and 126 each coordinate Mg(2+). Residue R131 coordinates dimethylallyl diphosphate. An isopentenyl diphosphate-binding site is contributed by R132. Dimethylallyl diphosphate is bound by residues K209, T210, and Q243. Mg(2+) is bound at residue D246. Dimethylallyl diphosphate-binding residues include N250, K260, and K270.

Belongs to the FPP/GGPP synthase family. Requires Mg(2+) as cofactor.

The enzyme catalyses isopentenyl diphosphate + dimethylallyl diphosphate = (2E)-geranyl diphosphate + diphosphate. The catalysed reaction is isopentenyl diphosphate + (2E)-geranyl diphosphate = (2E,6E)-farnesyl diphosphate + diphosphate. It catalyses the reaction isopentenyl diphosphate + (2E,6E)-farnesyl diphosphate = (2E,6E,10E)-geranylgeranyl diphosphate + diphosphate. The protein operates within secondary metabolite biosynthesis. Functionally, geranylgeranyl pyrophosphate synthase; part of the gene cluster that mediates the biosynthesis of the indole diterpenes penitrems. The geranylgeranyl diphosphate (GGPP) synthase ptmG catalyzes the first step in penitrem biosynthesis via conversion of farnesyl pyrophosphate and isopentyl pyrophosphate into geranylgeranyl pyrophosphate (GGPP). Condensation of indole-3-glycerol phosphate with GGPP by the prenyl transferase ptmC then forms 3-geranylgeranylindole (3-GGI). Epoxidation by the FAD-dependent monooxygenase ptmM leads to a epoxidized-GGI that is substrate of the terpene cyclase ptmB for cyclization to yield paspaline. Paspaline is subsequently converted to 13-desoxypaxilline by the cytochrome P450 monooxygenase ptmP, the latter being then converted to paxilline by the cytochrome P450 monooxygenase ptmQ. Paxilline is converted to beta-paxitriol via C-10 ketoreduction by the short-chain dehydrogenase ptmH which can be monoprenylated at the C-20 by the indole diterpene prenyltransferase ptmD. A two-step elimination (acetylation and elimination) process performed by the O-acetyltransferase ptmV and ptmI leads to the production of the prenylated form of penijanthine. The FAD-linked oxidoreductase ptmO then converts the prenylated form of penijanthine into PC-M5 which is in turn transformed into PC-M4 by the aromatic dimethylallyltransferase ptmE. Five sequential oxidative transformations performed by the cytochrome P450 monooxygenases ptmK, ptmU, ptmL, ptmN and ptmJ yield the various penitrem compounds. PtmK, ptmU and ptmM are involved in the formation of the key bicyclic ring of penitrem C via the formation of the intermediates secopenitrem D and penitrem D. PtmL catalyzes the epoxidation of penitrem D and C to yield penitrem B and F, respectively. PtmJ catalyzes the last benzylic hydroxylation to convert penitrem B to prenitrem E and penitrem F to penitrem A. This is Geranylgeranyl pyrophosphate synthase penG from Penicillium ochrochloron.